Here is a 478-residue protein sequence, read N- to C-terminus: UDP-N-acetylmuramate--L-alanine ligase (478 aa).

125 to 131 lines the ATP pocket; it reads GTHGKTT.

Belongs to the MurCDEF family.

The protein localises to the cytoplasm. It carries out the reaction UDP-N-acetyl-alpha-D-muramate + L-alanine + ATP = UDP-N-acetyl-alpha-D-muramoyl-L-alanine + ADP + phosphate + H(+). It functions in the pathway cell wall biogenesis; peptidoglycan biosynthesis. Its function is as follows. Cell wall formation. The chain is UDP-N-acetylmuramate--L-alanine ligase from Dichelobacter nodosus (strain VCS1703A).